Reading from the N-terminus, the 479-residue chain is Octopamine receptor (479 aa).

The Extracellular portion of the chain corresponds to 1–57 (MGQAATHDANNYTSINYTEIYDVIEDEKDVCAVADEPNIPCSFGISLAVPEWEAICT). 2 N-linked (GlcNAc...) asparagine glycosylation sites follow: Asn11 and Asn16. A helical transmembrane segment spans residues 58-80 (AIILTMIIISTVVGNILVILSVF). The Cytoplasmic segment spans residues 81 to 90 (TYKPLRIVQN). A helical membrane pass occupies residues 91-112 (FFIVSLAVADLTVAILVLPLNV). At 113–129 (AYSILGQWVFGIYVCKM) the chain is on the extracellular side. The chain crosses the membrane as a helical span at residues 130-150 (WLTCDIMCCTSSILNLCAIAL). The Cytoplasmic portion of the chain corresponds to 151-170 (DRYWAITDPINYAQKRTLER). Residues 171 to 193 (VLFMIGIVWILSLVISSPPLLGW) form a helical membrane-spanning segment. The Extracellular segment spans residues 194 to 218 (NDWPEVFEPDTPCRLTSQPGFVIFS). Residues 219-240 (SSGSFYIPLVIMTVVYFEIYLA) form a helical membrane-spanning segment. Residues 241–407 (TKKRLRDRAK…LTRERRAART (167 aa)) are Cytoplasmic-facing. Positions 260–319 (GRNKYETKESDPNDQDSVSSDANPNEHQGGTRLVAENEKKHRTRKLTPKKKPKRRYWSKD) are disordered. The segment covering 274-287 (QDSVSSDANPNEHQ) has biased composition (polar residues). Residues 299–315 (KHRTRKLTPKKKPKRRY) are compositionally biased toward basic residues. A helical transmembrane segment spans residues 408-429 (LGIIMGVFVVCWLPFFVIYLVI). Over 430-441 (PFCVSCCLSNKF) the chain is Extracellular. Residues 442 to 462 (INFITWLGYVNSALNPLIYTI) form a helical membrane-spanning segment. The Cytoplasmic segment spans residues 463–479 (FNMDFRRAFKKLLFIKC).

Belongs to the G-protein coupled receptor 1 family.

It is found in the cell membrane. Functionally, receptor for octopamine. Octopamine (OA) is a neurotransmitter, neurohormone, and neuromodulator in invertebrates. The activity of this receptor is mediated by G proteins which activate adenylyl cyclase. This chain is Octopamine receptor, found in Bombyx mori (Silk moth).